A 962-amino-acid polypeptide reads, in one-letter code: Leucine--tRNA ligase (962 aa).

Positions 68–79 (PYPSGAGLHVGH) match the 'HIGH' region motif. Residues 559 to 582 (DYSPRTFDPDDANTSPETPLSRNE) are disordered. Over residues 570–579 (ANTSPETPLS) the composition is skewed to polar residues. The 'KMSKS' region signature appears at 733 to 737 (KMGKS). An ATP-binding site is contributed by Lys736.

Belongs to the class-I aminoacyl-tRNA synthetase family.

It is found in the cytoplasm. The catalysed reaction is tRNA(Leu) + L-leucine + ATP = L-leucyl-tRNA(Leu) + AMP + diphosphate. This is Leucine--tRNA ligase from Streptomyces avermitilis (strain ATCC 31267 / DSM 46492 / JCM 5070 / NBRC 14893 / NCIMB 12804 / NRRL 8165 / MA-4680).